A 159-amino-acid polypeptide reads, in one-letter code: Cytochrome c-type biogenesis protein CcmE (159 aa).

Over 1–8 (MNLRRKNR) the chain is Cytoplasmic. Residues 9–29 (LWVVCAVLAGLGLTTALVLYA) form a helical; Signal-anchor for type II membrane protein membrane-spanning segment. Over 30–159 (LRANIDLFYT…PQRADKDTSS (130 aa)) the chain is Periplasmic. The segment at 129-159 (KHDENYTPPEVEKAMQENHRRPQRADKDTSS) is disordered. Positions 130 and 134 each coordinate heme.

It belongs to the CcmE/CycJ family.

It is found in the cell inner membrane. Heme chaperone required for the biogenesis of c-type cytochromes. Transiently binds heme delivered by CcmC and transfers the heme to apo-cytochromes in a process facilitated by CcmF and CcmH. This Salmonella typhimurium (strain LT2 / SGSC1412 / ATCC 700720) protein is Cytochrome c-type biogenesis protein CcmE.